The primary structure comprises 206 residues: Small ribosomal subunit protein uS4 (206 aa).

In terms of domain architecture, S4 RNA-binding spans 96–156 (TRLDNVVYRM…EKSRTQARIK (61 aa)).

Belongs to the universal ribosomal protein uS4 family. In terms of assembly, part of the 30S ribosomal subunit. Contacts protein S5. The interaction surface between S4 and S5 is involved in control of translational fidelity.

One of the primary rRNA binding proteins, it binds directly to 16S rRNA where it nucleates assembly of the body of the 30S subunit. Its function is as follows. With S5 and S12 plays an important role in translational accuracy. This Shewanella sp. (strain MR-4) protein is Small ribosomal subunit protein uS4.